The chain runs to 145 residues: MSSRREGRELALQALYSSDAESLGGTFALKKIMDNFADGSEPSLDVHGRSFTFATELVNGVLSNSEAIDRKIEEKSKNWSIARMAKVDLNILRLAVFELFYRPDIPKNVTINEAIEVAKKFGAEDSPAFINGILDEIASSLPDKE.

This sequence belongs to the NusB family.

In terms of biological role, involved in transcription antitermination. Required for transcription of ribosomal RNA (rRNA) genes. Binds specifically to the boxA antiterminator sequence of the ribosomal RNA (rrn) operons. In Geotalea daltonii (strain DSM 22248 / JCM 15807 / FRC-32) (Geobacter daltonii), this protein is Transcription antitermination protein NusB.